Here is a 429-residue protein sequence, read N- to C-terminus: UDP-N-acetylglucosamine 1-carboxyvinyltransferase (429 aa).

22-23 provides a ligand contact to phosphoenolpyruvate; sequence KN. R102 serves as a coordination point for UDP-N-acetyl-alpha-D-glucosamine. C126 acts as the Proton donor in catalysis. A 2-(S-cysteinyl)pyruvic acid O-phosphothioketal modification is found at C126. UDP-N-acetyl-alpha-D-glucosamine contacts are provided by residues 131–135, D316, and I338; that span reads RPVDL.

Belongs to the EPSP synthase family. MurA subfamily.

The protein localises to the cytoplasm. The catalysed reaction is phosphoenolpyruvate + UDP-N-acetyl-alpha-D-glucosamine = UDP-N-acetyl-3-O-(1-carboxyvinyl)-alpha-D-glucosamine + phosphate. Its pathway is cell wall biogenesis; peptidoglycan biosynthesis. In terms of biological role, cell wall formation. Adds enolpyruvyl to UDP-N-acetylglucosamine. The polypeptide is UDP-N-acetylglucosamine 1-carboxyvinyltransferase (Methylobacterium nodulans (strain LMG 21967 / CNCM I-2342 / ORS 2060)).